Reading from the N-terminus, the 711-residue chain is MSVPSSLSQSAINANSHGGPALSFPFPLHAAHNQLLNAKLQATAVVPKDLRSAMGEGSVPEPGPANAKWLKEGQNQLRRAATAHRDQNRNVTLTLAEEASQEAETAPLGPKGLMHLYSELELSAHNAANRGLHGSALIINTQGLGPDEGEEKAAGEVEEEDEDEEEEDEEEEDLSSPQGLPEPLENVEVPSGPQVLTDGPREHSKSASLLFGMRNSAASDEDSSWATLSQGSPSYGSPEDTDSFWNPNAFETDSDLPAGWMRVQDTSGTYYWHIPTGTTQWEPPGRASPSQGNSPQEESQLTWTGFAHQEGFEEGEFWKDEPSEEAPMELGLKDPEEGTLPFSAQSLSPEPVPQEEENLPQRNANPGIKCFAVRSLGWVEMTEEELAPGRSSVAVNNCIRQLSYHKNNLHDPMSGGWGEGKDLLLQLEDETLKLVEPQNQTLLHAQPIVSIRVWGVGRDSGRERDFAYVARDKLTQMLKCHVFRCEAPAKNIATSLHEICSKIMSERRNARCLVNGLSLDHSKLVDVPFQVEFPAPKNELVQKFQVYYLGNVPVAKPVGVDVINGALESVLSSSSREQWTPSHVSVAPATLTILHQQTEAVLGECRVRFLSFLAVGRDVHTFAFIMAAGPASFCCHMFWCEPNAASLSEAVQAACMLRYQKCLDARSQTSTSCLPAPPAESVARRVGWTVRRGVQSLWGSLKPKRLGSQTP.

S135 is modified (phosphoserine). Disordered regions lie at residues 140 to 257 (NTQG…SDLP), 277 to 300 (GTTQ…EESQ), and 321 to 364 (EPSE…QRNA). Residues 156–174 (EVEEEDEDEEEEDEEEEDL) are compositionally biased toward acidic residues. K205 carries the post-translational modification N6-acetyllysine. The span at 224-235 (SWATLSQGSPSY) shows a compositional bias: polar residues. One can recognise a WW domain in the interval 254–286 (SDLPAGWMRVQDTSGTYYWHIPTGTTQWEPPGR). Residues 288–300 (SPSQGNSPQEESQ) show a composition bias toward polar residues. PID domains lie at 365–533 (NPGI…QVEF) and 538–700 (NELV…LWGS). S460 is subject to Phosphoserine; by PKC. A Phosphoserine modification is found at S518. Phosphotyrosine; by ABL1 is present on Y548. S611 carries the post-translational modification Phosphoserine; by SGK1. At K702 the chain carries N6-acetyllysine.

Component of a complex, at least composed of APBB1, RASD1/DEXRAS1 and APP. Interacts (via PID domain 2) with APP (with the intracellular domain of the amyloid-beta precursor protein). Interacts (via PID domain 2) with RASD1/DEXRAS1; impairs the transcription activation activity. Interacts (via PID domain 1) with KAT5/TIP60. Interacts (via the WW domain) with the proline-rich region of APBB1IP. Interacts with TSHZ1 and TSHZ2. Interacts (via the WW domain) with histone H2AX (when phosphorylated on 'Tyr-142') and the proline-rich region of ENAH. Interacts with MAPK8. Interacts (via PID domain 1) with TSHZ3 (via homeobox domain). Interacts with SET. Found in a trimeric complex with HDAC1 and TSHZ3; the interaction between HDAC1 and APBB1 is mediated by TSHZ3. Interacts (via WWW domain) with NEK6. Interacts (via WWW domain) with ABL1. Interacts with RNF157. Interacts with ARF6. Post-translationally, polyubiquitination by RNF157 leads to degradation by the proteasome. Phosphorylation at Ser-611 by SGK1 promotes its localization to the nucleus. Phosphorylated following nuclear translocation. Phosphorylation at Tyr-547 by ABL1 enhances transcriptional activation activity and reduces the affinity for RASD1/DEXRAS1. Phosphorylated at Ser-460 by PKC upon insulin activation. In terms of processing, acetylation at Lys-205 and Lys-702 by KAT5 promotes its transcription activator activity. As to expression, brain, not in liver, very low in other tissues. The long (neuron-specific) form is expressed only in brain.

It is found in the cell membrane. The protein resides in the cytoplasm. The protein localises to the nucleus. Its subcellular location is the cell projection. It localises to the growth cone. It is found in the nucleus speckle. Its function is as follows. Transcription coregulator that can have both coactivator and corepressor functions. Adapter protein that forms a transcriptionally active complex with the gamma-secretase-derived amyloid precursor protein (APP) intracellular domain. Plays a central role in the response to DNA damage by translocating to the nucleus and inducing apoptosis. May act by specifically recognizing and binding histone H2AX phosphorylated on 'Tyr-142' (H2AXY142ph) at double-strand breaks (DSBs), recruiting other pro-apoptosis factors such as MAPK8/JNK1. Required for histone H4 acetylation at double-strand breaks (DSBs). Its ability to specifically bind modified histones and chromatin modifying enzymes such as KAT5/TIP60, probably explains its transcription activation activity. Functions in association with TSHZ3, SET and HDAC factors as a transcriptional repressor, that inhibits the expression of CASP4. Associates with chromatin in a region surrounding the CASP4 transcriptional start site(s). Involved in hippocampal neurite branching and neuromuscular junction formation, as a result plays a role in spatial memory functioning. Plays a role in the maintenance of lens transparency. May play a role in muscle cell strength. Acts as a molecular adapter that functions in neurite outgrowth by activating the RAC1-ARF6 axis upon insulin treatment. In Rattus norvegicus (Rat), this protein is Amyloid beta precursor protein binding family B member 1.